We begin with the raw amino-acid sequence, 396 residues long: Inositol hexakisphosphate kinase 3 (396 aa).

Substrate is bound at residue P206–G214.

It belongs to the inositol phosphokinase (IPK) family. As to expression, highly expressed in cerebellum, brain cortex, kidney, thymus and lung. Detected at lower levels in hippocampus, testis, heart and olfactory bulb.

Its subcellular location is the cytoplasm. The enzyme catalyses 1D-myo-inositol hexakisphosphate + ATP = 5-diphospho-1D-myo-inositol 1,2,3,4,6-pentakisphosphate + ADP. It catalyses the reaction 1-diphospho-1D-myo-inositol 2,3,4,5,6-pentakisphosphate + ATP + H(+) = 1,5-bis(diphospho)-1D-myo-inositol 2,3,4,6-tetrakisphosphate + ADP. Its function is as follows. Converts inositol hexakisphosphate (InsP6) to diphosphoinositol pentakisphosphate (InsP7/PP-InsP5). Converts 1,3,4,5,6-pentakisphosphate (InsP5) to PP-InsP4. The protein is Inositol hexakisphosphate kinase 3 (Ip6k3) of Mus musculus (Mouse).